Reading from the N-terminus, the 576-residue chain is Arginine--tRNA ligase (576 aa).

The 'HIGH' region signature appears at 126–136 (ANPTGPMHIGH).

Belongs to the class-I aminoacyl-tRNA synthetase family. Monomer.

It localises to the cytoplasm. It carries out the reaction tRNA(Arg) + L-arginine + ATP = L-arginyl-tRNA(Arg) + AMP + diphosphate. The protein is Arginine--tRNA ligase of Rickettsia akari (strain Hartford).